The sequence spans 168 residues: uncharacterized protein (168 aa).

A disordered region spans residues 1-52 (MVLGLASFPESLSSQSETATQPRRPSVKWDLGSDYRKGTEETTASGSNFRRE). The segment covering 10-23 (ESLSSQSETATQPR) has biased composition (polar residues). The segment covering 31-40 (LGSDYRKGTE) has biased composition (basic and acidic residues).

This is an uncharacterized protein from Mus musculus (Mouse).